The primary structure comprises 339 residues: Deoxyhypusine hydroxylase (339 aa).

2 HEAT-like PBS-type repeats span residues 71–97 (LKHE…VVKN) and 104–130 (CRHE…LRDD). Fe cation-binding residues include histidine 73, glutamate 74, histidine 106, and glutamate 107. Positions 159–183 (EKLKPSDFTSIDPAPPLPMASSQPS) are disordered. HEAT-like PBS-type repeat units follow at residues 200–233 (QRYR…GLKD), 238–264 (FRHE…TLSD), and 271–298 (VRHE…FLND). Residues histidine 240, glutamate 241, histidine 273, and glutamate 274 each contribute to the Fe cation site.

The protein belongs to the deoxyhypusine hydroxylase family. Fe(2+) serves as cofactor.

It is found in the cytoplasm. It localises to the nucleus. The enzyme catalyses [eIF5A protein]-deoxyhypusine + AH2 + O2 = [eIF5A protein]-hypusine + A + H2O. It participates in protein modification; eIF5A hypusination. Functionally, catalyzes the hydroxylation of the N(6)-(4-aminobutyl)-L-lysine intermediate to form hypusine, an essential post-translational modification only found in mature eIF-5A factor. This is Deoxyhypusine hydroxylase (lia1) from Aspergillus oryzae (strain ATCC 42149 / RIB 40) (Yellow koji mold).